Here is a 251-residue protein sequence, read N- to C-terminus: HTH-type transcriptional regulator UlaR (251 aa).

One can recognise an HTH deoR-type domain in the interval 3 to 58 (EAQRHQILLDMLAQLGFVTVENVIERLGISPATARRDINKLDESGKLKKVRNGAEA). A DNA-binding region (H-T-H motif) is located at residues 20-39 (VTVENVIERLGISPATARRD).

It localises to the cytoplasm. Represses ulaG and the ulaABCDEF operon. The chain is HTH-type transcriptional regulator UlaR from Salmonella agona (strain SL483).